Here is a 302-residue protein sequence, read N- to C-terminus: Tyrosine recombinase XerC (302 aa).

The 85-residue stretch at aspartate 6–leucine 90 folds into the Core-binding (CB) domain. A Tyr recombinase domain is found at proline 111 to aspartate 290. Residues arginine 150, lysine 174, histidine 242, arginine 245, and histidine 268 contribute to the active site. Tyrosine 277 serves as the catalytic O-(3'-phospho-DNA)-tyrosine intermediate.

It belongs to the 'phage' integrase family. XerC subfamily. In terms of assembly, forms a cyclic heterotetrameric complex composed of two molecules of XerC and two molecules of XerD.

Its subcellular location is the cytoplasm. Site-specific tyrosine recombinase, which acts by catalyzing the cutting and rejoining of the recombining DNA molecules. The XerC-XerD complex is essential to convert dimers of the bacterial chromosome into monomers to permit their segregation at cell division. It also contributes to the segregational stability of plasmids. This is Tyrosine recombinase XerC from Shewanella putrefaciens (strain CN-32 / ATCC BAA-453).